We begin with the raw amino-acid sequence, 732 residues long: Prolyl endopeptidase-like (732 aa).

Residues Ser575, Asp661, and His707 each act as charge relay system in the active site.

It belongs to the peptidase S9A family. Homodimer.

Its subcellular location is the cytoplasm. The protein resides in the cytosol. Functionally, serine peptidase whose precise substrate specificity remains unclear. Does not cleave peptides after a arginine or lysine residue. Regulates trans-Golgi network morphology and sorting by regulating the membrane binding of the AP-1 complex. May play a role in the regulation of synaptic vesicle exocytosis. This chain is Prolyl endopeptidase-like (PREPL), found in Gallus gallus (Chicken).